Here is a 432-residue protein sequence, read N- to C-terminus: Enolase (432 aa).

Position 163 (Gln163) interacts with (2R)-2-phosphoglycerate. The Proton donor role is filled by Glu205. Positions 241, 289, and 316 each coordinate Mg(2+). Positions 341, 370, 371, and 392 each coordinate (2R)-2-phosphoglycerate. The active-site Proton acceptor is Lys341.

It belongs to the enolase family. It depends on Mg(2+) as a cofactor.

The protein resides in the cytoplasm. Its subcellular location is the secreted. It localises to the cell surface. It carries out the reaction (2R)-2-phosphoglycerate = phosphoenolpyruvate + H2O. The protein operates within carbohydrate degradation; glycolysis; pyruvate from D-glyceraldehyde 3-phosphate: step 4/5. Its function is as follows. Catalyzes the reversible conversion of 2-phosphoglycerate (2-PG) into phosphoenolpyruvate (PEP). It is essential for the degradation of carbohydrates via glycolysis. This chain is Enolase, found in Treponema pallidum (strain Nichols).